The sequence spans 227 residues: UPF0173 metal-dependent hydrolase Oter_4201 (227 aa).

This sequence belongs to the UPF0173 family.

The protein is UPF0173 metal-dependent hydrolase Oter_4201 of Opitutus terrae (strain DSM 11246 / JCM 15787 / PB90-1).